A 160-amino-acid polypeptide reads, in one-letter code: Small ribosomal subunit protein uS19 (160 aa).

Positions 1–27 (MARQKFSGKGGKGKSKKGQQSTAPRRR) are disordered.

The protein belongs to the universal ribosomal protein uS19 family.

In terms of biological role, protein S19 forms a complex with S13 that binds strongly to the 16S ribosomal RNA. This Methanococcus vannielii (strain ATCC 35089 / DSM 1224 / JCM 13029 / OCM 148 / SB) protein is Small ribosomal subunit protein uS19.